The primary structure comprises 543 residues: Mitochondrial distribution and morphology protein 34 (543 aa).

The 202-residue stretch at 1–202 (MSFNVNWNSL…LPTLLHKVSL (202 aa)) folds into the SMP-LTD domain. The disordered stretch occupies residues 519–543 (AFSHNDPSITPFELPPPPYHQLSRA).

Belongs to the MDM34 family. In terms of assembly, component of the ER-mitochondria encounter structure (ERMES) or MDM complex, composed of MMM1, MDM10, MDM12 and MDM34.

Its subcellular location is the mitochondrion outer membrane. Functionally, component of the ERMES/MDM complex, which serves as a molecular tether to connect the endoplasmic reticulum (ER) and mitochondria. Components of this complex are involved in the control of mitochondrial shape and protein biogenesis, and function in nonvesicular lipid trafficking between the ER and mitochondria. MDM34 is required for the interaction of the ER-resident membrane protein MMM1 and the outer mitochondrial membrane-resident beta-barrel protein MDM10. This is Mitochondrial distribution and morphology protein 34 from Clavispora lusitaniae (strain ATCC 42720) (Yeast).